A 207-amino-acid chain; its full sequence is Crossover junction endodeoxyribonuclease RuvC (207 aa).

Catalysis depends on residues D11, E71, and D143. Mg(2+) is bound by residues D11, E71, and D143.

The protein belongs to the RuvC family. As to quaternary structure, homodimer which binds Holliday junction (HJ) DNA. The HJ becomes 2-fold symmetrical on binding to RuvC with unstacked arms; it has a different conformation from HJ DNA in complex with RuvA. In the full resolvosome a probable DNA-RuvA(4)-RuvB(12)-RuvC(2) complex forms which resolves the HJ. Requires Mg(2+) as cofactor.

The protein localises to the cytoplasm. It catalyses the reaction Endonucleolytic cleavage at a junction such as a reciprocal single-stranded crossover between two homologous DNA duplexes (Holliday junction).. In terms of biological role, the RuvA-RuvB-RuvC complex processes Holliday junction (HJ) DNA during genetic recombination and DNA repair. Endonuclease that resolves HJ intermediates. Cleaves cruciform DNA by making single-stranded nicks across the HJ at symmetrical positions within the homologous arms, yielding a 5'-phosphate and a 3'-hydroxyl group; requires a central core of homology in the junction. The consensus cleavage sequence is 5'-(A/T)TT(C/G)-3'. Cleavage occurs on the 3'-side of the TT dinucleotide at the point of strand exchange. HJ branch migration catalyzed by RuvA-RuvB allows RuvC to scan DNA until it finds its consensus sequence, where it cleaves and resolves the cruciform DNA. The protein is Crossover junction endodeoxyribonuclease RuvC of Methylobacterium radiotolerans (strain ATCC 27329 / DSM 1819 / JCM 2831 / NBRC 15690 / NCIMB 10815 / 0-1).